The sequence spans 467 residues: Hydroxyacid-oxoacid transhydrogenase, mitochondrial (467 aa).

Lysine 445 carries the post-translational modification N6-acetyllysine. Phosphoserine is present on serine 452.

It belongs to the iron-containing alcohol dehydrogenase family. Hydroxyacid-oxoacid transhydrogenase subfamily. Only expressed in adult liver.

The protein localises to the mitochondrion. The enzyme catalyses (S)-3-hydroxybutanoate + 2-oxoglutarate = (R)-2-hydroxyglutarate + acetoacetate. It carries out the reaction 4-hydroxybutanoate + 2-oxoglutarate = (R)-2-hydroxyglutarate + succinate semialdehyde. In terms of biological role, catalyzes the cofactor-independent reversible oxidation of gamma-hydroxybutyrate (GHB) to succinic semialdehyde (SSA) coupled to reduction of 2-ketoglutarate (2-KG) to D-2-hydroxyglutarate (D-2-HG). D,L-3-hydroxyisobutyrate and L-3-hydroxybutyrate (L-3-OHB) are also substrates for HOT with 10-fold lower activities. This Homo sapiens (Human) protein is Hydroxyacid-oxoacid transhydrogenase, mitochondrial (ADHFE1).